The following is a 503-amino-acid chain: Variant surface glycoprotein ILTAT 1.3 (503 aa).

Residues 1 to 29 (MTKAYENRMLLQALVLAAVLCTTHAEGTA) form the signal peptide. 2 cysteine pairs are disulfide-bonded: Cys-42-Cys-168 and Cys-150-Cys-206. 2 N-linked (GlcNAc...) asparagine glycosylation sites follow: Asn-419 and Asn-432. A lipid anchor (GPI-anchor amidated aspartate) is attached at Asp-480. The propeptide at 481 to 503 (SSFILNKQFALSVVSAAFAALLF) is removed in mature form.

The protein localises to the cell membrane. VSG forms a coat on the surface of the parasite. The trypanosome evades the immune response of the host by expressing a series of antigenically distinct VSGs from an estimated 1000 VSG genes. This Trypanosoma brucei brucei protein is Variant surface glycoprotein ILTAT 1.3.